The primary structure comprises 489 residues: MTFRHCVAVDLGASSGRVMLARYDSKHRTLTLREIHRFVNCLQKTDGFDTWDIDSLEKDIRLGLKKVCNEGILIDSIGIDTWGVDYVLLDKQGQRVGLPVSYRDNRTTGIMPQALVQIGKSEIYRRSGIQFLPFNTIYQLRALTKQQPELTAQVAHALLMPDYFSYRLTGEMNWEYTNATTTQLVNINTDDWDDTLLAWTGAKKSWFGRPSHPGNVIGDWICPQGNRIPVVAVASHDTASAVIASPLANKHSAYLSSGTWSLMGFESKKPYTTDEALAANITNEGGAEGRYRVLKNIMGLWLLQRVLKERRITDLPALIAQTEALPACRFLINPNDDRFINPDDMHAEIQAACRETDQPVPVSDAELARCIFDSLALLYADILHELANLRGEKFTQLHIVGGGCQNALLNQLCADACGIRVMAGPVEASTLGNIGIQLMTLDELNNVDDFRQVVSANYDLTTYIPNPDSEIARHVAQFQPKRQTKELCA.

Position 13–17 (13–17) interacts with ATP; sequence ASSGR. C68 and C222 are joined by a disulfide. Substrate-binding positions include G83 and 236–238; that span reads HDT. Catalysis depends on D237, which acts as the Proton acceptor. Residue T259 coordinates ATP. N296 is a binding site for substrate. Q304 is an ATP binding site. An intrachain disulfide couples C353 to C370. G402 is a binding site for ATP. C413 and C417 form a disulfide bridge.

The protein belongs to the rhamnulokinase family. Mg(2+) serves as cofactor.

The catalysed reaction is L-rhamnulose + ATP = L-rhamnulose 1-phosphate + ADP + H(+). The protein operates within carbohydrate degradation; L-rhamnose degradation; glycerone phosphate from L-rhamnose: step 2/3. Its function is as follows. Involved in the catabolism of L-rhamnose (6-deoxy-L-mannose). Catalyzes the transfer of the gamma-phosphate group from ATP to the 1-hydroxyl group of L-rhamnulose to yield L-rhamnulose 1-phosphate. The polypeptide is Rhamnulokinase (Salmonella heidelberg (strain SL476)).